A 348-amino-acid chain; its full sequence is Histidinol-phosphate aminotransferase (348 aa).

At K210 the chain carries N6-(pyridoxal phosphate)lysine.

The protein belongs to the class-II pyridoxal-phosphate-dependent aminotransferase family. Histidinol-phosphate aminotransferase subfamily. Homodimer. Requires pyridoxal 5'-phosphate as cofactor.

It carries out the reaction L-histidinol phosphate + 2-oxoglutarate = 3-(imidazol-4-yl)-2-oxopropyl phosphate + L-glutamate. It participates in amino-acid biosynthesis; L-histidine biosynthesis; L-histidine from 5-phospho-alpha-D-ribose 1-diphosphate: step 7/9. The chain is Histidinol-phosphate aminotransferase from Pseudomonas putida (strain ATCC 700007 / DSM 6899 / JCM 31910 / BCRC 17059 / LMG 24140 / F1).